A 126-amino-acid polypeptide reads, in one-letter code: Non-specific lipid-transfer protein 13 (126 aa).

A signal peptide spans 1–20 (MDTHTTKLVAISLLLLLVIS). Intrachain disulfides connect Cys-36/Cys-85, Cys-46/Cys-61, Cys-62/Cys-109, and Cys-83/Cys-123.

This sequence belongs to the plant LTP family.

In terms of biological role, plant non-specific lipid-transfer proteins transfer phospholipids as well as galactolipids across membranes. May play a role in wax or cutin deposition in the cell walls of expanding epidermal cells and certain secretory tissues. The protein is Non-specific lipid-transfer protein 13 (LTP13) of Arabidopsis thaliana (Mouse-ear cress).